A 62-amino-acid chain; its full sequence is DNA-directed RNA polymerase subunit Rpo10 (62 aa).

The Zn(2+) site is built by cysteine 6, cysteine 9, cysteine 43, and cysteine 44.

It belongs to the archaeal Rpo10/eukaryotic RPB10 RNA polymerase subunit family. As to quaternary structure, part of the RNA polymerase complex. It depends on Zn(2+) as a cofactor.

It is found in the cytoplasm. The enzyme catalyses RNA(n) + a ribonucleoside 5'-triphosphate = RNA(n+1) + diphosphate. Its function is as follows. DNA-dependent RNA polymerase (RNAP) catalyzes the transcription of DNA into RNA using the four ribonucleoside triphosphates as substrates. The sequence is that of DNA-directed RNA polymerase subunit Rpo10 from Methanosarcina acetivorans (strain ATCC 35395 / DSM 2834 / JCM 12185 / C2A).